Consider the following 2054-residue polypeptide: Multiple PDZ domain protein (2054 aa).

Residues 3 to 63 (ETIDKNRALQ…SLQQLKDQVN (61 aa)) enclose the L27 domain. Residues 138–225 (IFELLKPPCG…TIQLVIARGS (88 aa)) enclose the PDZ 1 domain. Position 231 is a phosphoserine (S231). PDZ domains lie at 258–338 (TIEL…ARGA), 377–463 (DVEL…MRKG), 545–626 (VAHV…CRRT), and 692–778 (AIEL…VAKP). Residues S782 and S1065 each carry the phosphoserine modification. The PDZ 6 domain occupies 995–1076 (TVTIAKGSSS…IGPDIKITYV (82 aa)). The interval 1110-1129 (PELPEREEGEGEESELQNAA) is disordered. The 93-residue stretch at 1138 to 1230 (RVELWREPSK…PVVFMVQSIV (93 aa)) folds into the PDZ 7 domain. R1157 carries the post-translational modification Omega-N-methylarginine. Residues 1261–1273 (LQLTSDKAPSQSE) are compositionally biased toward polar residues. Residues 1261 to 1312 (LQLTSDKAPSQSESESEKATLCSVPSSSPSVFSEMSSDYAQPSATTVAEDED) are disordered. Residues 1283-1297 (SVPSSSPSVFSEMSS) show a composition bias toward low complexity. A PDZ 8 domain is found at 1337–1420 (MIELEKGHSG…KVKIIFIRNA (84 aa)). Residues 1433 to 1454 (AADPLPSTSESPQNKEVEPSIT) are disordered. A PDZ 9 domain is found at 1470 to 1551 (HLELPKDQGG…TVKLTVGAEN (82 aa)). Positions 1560–1594 (AAVTASGERKDSSQTPAVPAPDLEPIPSTSRSSTP) are disordered. PDZ domains lie at 1613 to 1696 (TIEI…YRDE) and 1709 to 1791 (TVEL…GRIK). The segment at 1795–1834 (FHSERRPSQSSQVSESSLSSFSLPRSGIHTSESSESSAKK) is disordered. 2 positions are modified to phosphoserine: S1802 and S1808. The segment covering 1802–1834 (SQSSQVSESSLSSFSLPRSGIHTSESSESSAKK) has biased composition (low complexity). PDZ domains are found at residues 1846 to 1932 (TVEI…VAGG) and 1971 to 2054 (TITL…MVLS).

In terms of assembly, interacts with F11R/JAM, CLDN1, NG2, CXADR, CRB1, MPP4 and PALS1, HTR2A, HTR2B, PLEKHA1/TAPP1 and PLEKHA2/TAPP2. Interacts with CXADR. Interacts with HTR2C, CLDN5, DLG4, GRIN1, SYNGAP1, CAMK2A and CAMK2B. Interacts with FAT4 (via cytoplasmic domain). Interacts with DLL1. Abundant in all cerebral cortical layers, especially the piriform cortex, the pyramidal cells of the CA1-CA3 subfields of the hippocampus, as well as the granular layer of the dentate gyrus. Detected in the internal granular layer and the mitral cell layer of the olfactory bulb; in the medial habenular nucleus; and in amygdaloid, thalamic, hypothalamic, and pontine nuclei. In the cerebellum, found at high levels in the granular layer. Detected in the lateral ventricle. Expression overlaps with 5-HT2C receptor expression in all regions of the brain including the choroid plexus, where 5-HT2C receptors are highly enriched.

The protein localises to the endomembrane system. The protein resides in the cell junction. Its subcellular location is the tight junction. It localises to the synapse. It is found in the apical cell membrane. The protein localises to the postsynaptic density. The protein resides in the cell projection. Its subcellular location is the dendrite. It localises to the synaptosome. In terms of biological role, member of the NMDAR signaling complex that may play a role in control of AMPAR potentiation and synaptic plasticity in excitatory synapses. Promotes clustering of HT2RC at the cell surface. The chain is Multiple PDZ domain protein (Mpdz) from Rattus norvegicus (Rat).